The primary structure comprises 170 residues: FMRFamide-like neuropeptides 6 (170 aa).

A signal peptide spans 1–19 (MNSRGLILTLGVVIAVAFA). Residue glutamine 20 is modified to Pyrrolidone carboxylic acid. Position 39 is a phenylalanine amide (phenylalanine 39). A propeptide spanning residues 42–51 (SDGGNPMEME) is cleaved from the precursor. Phenylalanine 60 carries the post-translational modification Phenylalanine amide. The propeptide occupies 63-81 (RSSGGDEQELVGGDDIDME). Position 90 is a phenylalanine amide (phenylalanine 90). A propeptide spanning residues 93-104 (RSGPQEDDMPME) is cleaved from the precursor. Phenylalanine 113 is subject to Phenylalanine amide. Positions 116–136 (RSSDMEVIGNEGVDGDAHDLF) are excised as a propeptide. Phenylalanine 145 carries the post-translational modification Phenylalanine amide. A propeptide spanning residues 148 to 159 (RSMGEEEDHDMM) is cleaved from the precursor. The interval 150–170 (MGEEEDHDMMKRKSAYMRFGR) is disordered. Basic residues predominate over residues 159 to 170 (MKRKSAYMRFGR). Phenylalanine 168 carries the phenylalanine amide modification.

The protein belongs to the FARP (FMRFamide related peptide) family. In terms of tissue distribution, each flp gene is expressed in a distinct set of neurons. Flp-6 is expressed in the ASE sensory neurons, AFD, ASG, PVT and I1 neurons.

The protein localises to the secreted. FMRFamides and FMRFamide-like peptides are neuropeptides. KSAYMRF-amide has an excitatory effect on dissected pharyngeal myogenic muscle system. In Caenorhabditis elegans, this protein is FMRFamide-like neuropeptides 6.